Here is a 269-residue protein sequence, read N- to C-terminus: Tetrahydromethanopterin S-methyltransferase subunit C (269 aa).

Transmembrane regions (helical) follow at residues 18–38, 39–59, 62–82, 84–104, 106–126, 152–172, 180–200, and 222–242; these read VLVIGAVLSLIGMYIAHFVPS, LAMLLGGLLAAGACVAGANTT, VAAYGLGTGVPSIGMVSLGMG, ISALAGVLIPSVLAGSVALPF, LVLATPIIAAVVAIIVGFIVG, ALAILGFCTAFAGGFSADLII, IIALAFIAAGMSILHPFNACI, and LVFSIAKLDIVSILVAAVFWI.

It belongs to the MtrC family. In terms of assembly, the complex is composed of 8 subunits; MtrA, MtrB, MtrC, MtrD, MtrE, MtrF, MtrG and MtrH.

It is found in the cell membrane. The catalysed reaction is 5-methyl-5,6,7,8-tetrahydromethanopterin + coenzyme M + 2 Na(+)(in) = 5,6,7,8-tetrahydromethanopterin + methyl-coenzyme M + 2 Na(+)(out). It functions in the pathway one-carbon metabolism; methanogenesis from CO(2); methyl-coenzyme M from 5,10-methylene-5,6,7,8-tetrahydromethanopterin: step 2/2. In terms of biological role, part of a complex that catalyzes the formation of methyl-coenzyme M and tetrahydromethanopterin from coenzyme M and methyl-tetrahydromethanopterin. This is an energy-conserving, sodium-ion translocating step. The polypeptide is Tetrahydromethanopterin S-methyltransferase subunit C (Methanococcus vannielii (strain ATCC 35089 / DSM 1224 / JCM 13029 / OCM 148 / SB)).